A 403-amino-acid polypeptide reads, in one-letter code: Phosphopentomutase (403 aa).

Mn(2+)-binding residues include Asp-13, Asp-298, His-303, Asp-339, His-340, and His-351.

This sequence belongs to the phosphopentomutase family. Mn(2+) serves as cofactor.

Its subcellular location is the cytoplasm. The catalysed reaction is 2-deoxy-alpha-D-ribose 1-phosphate = 2-deoxy-D-ribose 5-phosphate. It catalyses the reaction alpha-D-ribose 1-phosphate = D-ribose 5-phosphate. Its pathway is carbohydrate degradation; 2-deoxy-D-ribose 1-phosphate degradation; D-glyceraldehyde 3-phosphate and acetaldehyde from 2-deoxy-alpha-D-ribose 1-phosphate: step 1/2. Isomerase that catalyzes the conversion of deoxy-ribose 1-phosphate (dRib-1-P) and ribose 1-phosphate (Rib-1-P) to deoxy-ribose 5-phosphate (dRib-5-P) and ribose 5-phosphate (Rib-5-P), respectively. The protein is Phosphopentomutase of Streptococcus pneumoniae serotype 4 (strain ATCC BAA-334 / TIGR4).